A 517-amino-acid chain; its full sequence is 2,3-bisphosphoglycerate-independent phosphoglycerate mutase (517 aa).

Mn(2+) contacts are provided by D14 and S64. Catalysis depends on S64, which acts as the Phosphoserine intermediate. Residues H125, 155 to 156 (RD), R187, R193, 259 to 262 (RPDR), and K334 each bind substrate. The Mn(2+) site is built by D401, H405, D442, H443, and H461.

Belongs to the BPG-independent phosphoglycerate mutase family. As to quaternary structure, monomer. Mn(2+) is required as a cofactor.

The enzyme catalyses (2R)-2-phosphoglycerate = (2R)-3-phosphoglycerate. The protein operates within carbohydrate degradation; glycolysis; pyruvate from D-glyceraldehyde 3-phosphate: step 3/5. Its function is as follows. Catalyzes the interconversion of 2-phosphoglycerate and 3-phosphoglycerate. The chain is 2,3-bisphosphoglycerate-independent phosphoglycerate mutase from Symbiobacterium thermophilum (strain DSM 24528 / JCM 14929 / IAM 14863 / T).